A 131-amino-acid chain; its full sequence is Small ribosomal subunit protein uS8 (131 aa).

It belongs to the universal ribosomal protein uS8 family. In terms of assembly, part of the 30S ribosomal subunit. Contacts proteins S5 and S12.

Its function is as follows. One of the primary rRNA binding proteins, it binds directly to 16S rRNA central domain where it helps coordinate assembly of the platform of the 30S subunit. In Dechloromonas aromatica (strain RCB), this protein is Small ribosomal subunit protein uS8.